The chain runs to 315 residues: Acetaldehyde dehydrogenase (315 aa).

13–16 is an NAD(+) binding site; that stretch reads SGNI. C143 functions as the Acyl-thioester intermediate in the catalytic mechanism. NAD(+) contacts are provided by residues 174–182 and N285; that span reads SAGPGTRKN.

It belongs to the acetaldehyde dehydrogenase family.

The enzyme catalyses acetaldehyde + NAD(+) + CoA = acetyl-CoA + NADH + H(+). This Shewanella woodyi (strain ATCC 51908 / MS32) protein is Acetaldehyde dehydrogenase.